A 109-amino-acid polypeptide reads, in one-letter code: MFGKGGMGNLMKQAQQMQDKMAKVQEEIARMEVTGEAGAGLVKVTMTGSHSVRKVDIDASLLEDDKEMLEDLIAAACNDAARRVEENQKEKMAEVTGGMQLPPGMKMPF.

Positions 87-109 (NQKEKMAEVTGGMQLPPGMKMPF) are disordered.

Belongs to the YbaB/EbfC family. In terms of assembly, homodimer.

It localises to the cytoplasm. The protein resides in the nucleoid. Its function is as follows. Binds to DNA and alters its conformation. May be involved in regulation of gene expression, nucleoid organization and DNA protection. This is Nucleoid-associated protein Shal_1591 from Shewanella halifaxensis (strain HAW-EB4).